The primary structure comprises 566 residues: MTTREYDYIICGAGSAGNVLATRLTEDPDVTVLLLEAGGPDYRFDFRTQMPAALAYPLQGRRYNWAYETDPEPHMDNRRMECGRGKGLGGSSLINGMCYIRGNALDYDNWSTHKGLENWTYLDCLPYFKKAETRDVGPNDYHGGSGPVSVTTSKPGVNPLFEAMVDAGVQAGYPRTDDLNGYQQEGFGPMDRTVTPKGRRASTARGYLDQAKVRPNLEIVTHALADRILFDGKRASGVTYLRGSERATAHARREVLVCSGAIASPQLLQRSGVGPGAWLKELDIPVVLDLPGVGQNLQDHLEMYIQYECKEPVSLYPALKWWNQPKIGLEWMLNGTGLGASNHFEAGGFIRTRDDDPWPNIQYHFLPVAINYNGSNAIEMHGFQAHVGSMRSPSRGRVKLRSRDPNDHPSILFNYMAEALDWREFRDAIRATREIMRQPALDRYRGRELNPGADCKSDKELDAFVRARAETAFHPSCSCKMGYDDMAVVDEEGRVHGLDGLRVVDASIMPIITTGNLNAPTIMIAEKIADKIRGRTPLARVDVPYFVANGAPARNVAKAVRQPETV.

D7–E36 lines the FAD pocket. The tract at residues N180 to S202 is disordered. H474 functions as the Proton acceptor in the catalytic mechanism.

Belongs to the GMC oxidoreductase family. It depends on FAD as a cofactor.

It carries out the reaction choline + A = betaine aldehyde + AH2. The catalysed reaction is betaine aldehyde + NAD(+) + H2O = glycine betaine + NADH + 2 H(+). Its pathway is amine and polyamine biosynthesis; betaine biosynthesis via choline pathway; betaine aldehyde from choline (cytochrome c reductase route): step 1/1. In terms of biological role, involved in the biosynthesis of the osmoprotectant glycine betaine. Catalyzes the oxidation of choline to betaine aldehyde and betaine aldehyde to glycine betaine at the same rate. This chain is Oxygen-dependent choline dehydrogenase, found in Burkholderia cenocepacia (strain HI2424).